We begin with the raw amino-acid sequence, 36 residues long: Dermonecrotic toxin LgSicTox-beta-LOXN2 (36 aa).

Belongs to the arthropod phospholipase D family. Class II subfamily. It depends on Mg(2+) as a cofactor. In terms of processing, contains 2 disulfide bonds. As to expression, expressed by the venom gland.

It is found in the secreted. It catalyses the reaction an N-(acyl)-sphingosylphosphocholine = an N-(acyl)-sphingosyl-1,3-cyclic phosphate + choline. The enzyme catalyses an N-(acyl)-sphingosylphosphoethanolamine = an N-(acyl)-sphingosyl-1,3-cyclic phosphate + ethanolamine. The catalysed reaction is a 1-acyl-sn-glycero-3-phosphocholine = a 1-acyl-sn-glycero-2,3-cyclic phosphate + choline. It carries out the reaction a 1-acyl-sn-glycero-3-phosphoethanolamine = a 1-acyl-sn-glycero-2,3-cyclic phosphate + ethanolamine. Functionally, dermonecrotic toxins cleave the phosphodiester linkage between the phosphate and headgroup of certain phospholipids (sphingolipid and lysolipid substrates), forming an alcohol (often choline) and a cyclic phosphate. This toxin acts on sphingomyelin (SM). It may also act on ceramide phosphoethanolamine (CPE), lysophosphatidylcholine (LPC) and lysophosphatidylethanolamine (LPE), but not on lysophosphatidylserine (LPS), and lysophosphatidylglycerol (LPG). It acts by transphosphatidylation, releasing exclusively cyclic phosphate products as second products. Induces dermonecrosis, hemolysis, increased vascular permeability, edema, inflammatory response, and platelet aggregation. This chain is Dermonecrotic toxin LgSicTox-beta-LOXN2, found in Loxosceles gaucho (Spider).